Consider the following 372-residue polypeptide: Dual-specificity RNA methyltransferase RlmN (372 aa).

Glu-94 functions as the Proton acceptor in the catalytic mechanism. The Radical SAM core domain occupies 100–339; the sequence is DGDRATLCVS…VTIRKTRGDD (240 aa). An intrachain disulfide couples Cys-107 to Cys-344. Positions 114, 118, and 121 each coordinate [4Fe-4S] cluster. Residues 168–169, Ser-200, 222–224, and Asn-301 contribute to the S-adenosyl-L-methionine site; these read GE and SLH. The S-methylcysteine intermediate role is filled by Cys-344.

Belongs to the radical SAM superfamily. RlmN family. The cofactor is [4Fe-4S] cluster.

The protein resides in the cytoplasm. It carries out the reaction adenosine(2503) in 23S rRNA + 2 reduced [2Fe-2S]-[ferredoxin] + 2 S-adenosyl-L-methionine = 2-methyladenosine(2503) in 23S rRNA + 5'-deoxyadenosine + L-methionine + 2 oxidized [2Fe-2S]-[ferredoxin] + S-adenosyl-L-homocysteine. The catalysed reaction is adenosine(37) in tRNA + 2 reduced [2Fe-2S]-[ferredoxin] + 2 S-adenosyl-L-methionine = 2-methyladenosine(37) in tRNA + 5'-deoxyadenosine + L-methionine + 2 oxidized [2Fe-2S]-[ferredoxin] + S-adenosyl-L-homocysteine. Functionally, specifically methylates position 2 of adenine 2503 in 23S rRNA and position 2 of adenine 37 in tRNAs. m2A2503 modification seems to play a crucial role in the proofreading step occurring at the peptidyl transferase center and thus would serve to optimize ribosomal fidelity. In Aliivibrio fischeri (strain ATCC 700601 / ES114) (Vibrio fischeri), this protein is Dual-specificity RNA methyltransferase RlmN.